A 157-amino-acid polypeptide reads, in one-letter code: Putative glutathione-dependent formaldehyde-activating enzyme (157 aa).

Positions 3–134 (LEGSCHCGAV…WVEIESREQD (132 aa)) constitute a CENP-V/GFA domain. Residues C7, C9, C27, C29, C32, C79, and C82 each coordinate Zn(2+).

The protein belongs to the Gfa family. Requires Zn(2+) as cofactor.

It carries out the reaction S-(hydroxymethyl)glutathione = glutathione + formaldehyde. It functions in the pathway one-carbon metabolism; formaldehyde degradation; formate from formaldehyde (glutathione route): step 1/3. Functionally, catalyzes the condensation of formaldehyde and glutathione to S-hydroxymethylglutathione. The polypeptide is Putative glutathione-dependent formaldehyde-activating enzyme (Halomonas elongata (strain ATCC 33173 / DSM 2581 / NBRC 15536 / NCIMB 2198 / 1H9)).